A 577-amino-acid polypeptide reads, in one-letter code: Steryl-sulfatase (577 aa).

Residues M1–A19 form the signal peptide. Topologically, residues R21–V183 are lumenal. Ca(2+) contacts are provided by D34 and D35. Residue N46 is glycosylated (N-linked (GlcNAc...) asparagine). C74 contributes to the Ca(2+) binding site. C74 serves as the catalytic Nucleophile. The residue at position 74 (C74) is a 3-oxoalanine (Cys). H135 is a catalytic residue. Intrachain disulfides connect C140/C147 and C169/C241. A helical transmembrane segment spans residues F184 to L207. The Cytoplasmic segment spans residues A208–P211. Residues G212–L233 traverse the membrane as a helical segment. Residues Y234–G577 lie on the Lumenal side of the membrane. A glycan (N-linked (GlcNAc...) asparagine) is linked at N332. D341 and H342 together coordinate Ca(2+). Intrachain disulfides connect C445–C488, C480–C486, and C561–C571. N458 carries an N-linked (GlcNAc...) asparagine glycan.

This sequence belongs to the sulfatase family. As to quaternary structure, homodimer. Ca(2+) serves as cofactor. In terms of processing, the conversion to 3-oxoalanine (also known as C-formylglycine, FGly), of a serine or cysteine residue in prokaryotes and of a cysteine residue in eukaryotes, is critical for catalytic activity.

It is found in the microsome membrane. It localises to the endoplasmic reticulum membrane. It carries out the reaction dehydroepiandrosterone 3-sulfate + H2O = 3beta-hydroxyandrost-5-en-17-one + sulfate + H(+). It catalyses the reaction estrone 3-sulfate + H2O = estrone + sulfate + H(+). Its function is as follows. Catalyzes the conversion of sulfated steroid precursors, such as dehydroepiandrosterone sulfate (DHEA-S) and estrone sulfate to the free steroid. The chain is Steryl-sulfatase (Sts) from Rattus norvegicus (Rat).